The primary structure comprises 909 residues: Alanine--tRNA ligase (909 aa).

Zn(2+) contacts are provided by His600, His604, Cys704, and His708.

The protein belongs to the class-II aminoacyl-tRNA synthetase family. The cofactor is Zn(2+).

The protein localises to the cytoplasm. The catalysed reaction is tRNA(Ala) + L-alanine + ATP = L-alanyl-tRNA(Ala) + AMP + diphosphate. Functionally, catalyzes the attachment of alanine to tRNA(Ala) in a two-step reaction: alanine is first activated by ATP to form Ala-AMP and then transferred to the acceptor end of tRNA(Ala). Also edits incorrectly charged Ser-tRNA(Ala) and Gly-tRNA(Ala) via its editing domain. This chain is Alanine--tRNA ligase, found in Staphylothermus marinus (strain ATCC 43588 / DSM 3639 / JCM 9404 / F1).